The following is a 420-amino-acid chain: Nucleobindin-2 (420 aa).

The N-terminal stretch at 1–24 (MRWRTIQARYCFLLVPCVLTALEA) is a signal peptide. The DNA-binding element occupies 171–223 (RTRHEEFKKYEMMKEHERREYLKTLSEEKRKEEEAKFAEMKRKHEDHPKVNHP). The disordered stretch occupies residues 194–225 (TLSEEKRKEEEAKFAEMKRKHEDHPKVNHPGS). The interval 213 to 420 (KHEDHPKVNH…AGELKFEPHT (208 aa)) is binds to necdin. 2 consecutive EF-hand domains span residues 241–276 (PNDF…ELDK) and 293–328 (ERLR…KEFL). The Ca(2+) site is built by Asp-254, Asn-256, Asp-258, Glu-265, Asp-306, Asn-308, Asp-310, and Glu-317. Residues 304-334 (EIDNNKDRLVTLEEFLRATEKKEFLEPDSWE) carry the GBA motif. Ser-332 is subject to Phosphoserine. Basic and acidic residues predominate over residues 366–386 (DELQKQKEELQRQHDHLEAQK). The disordered stretch occupies residues 366–420 (DELQKQKEELQRQHDHLEAQKQEYQQAVQQLEQKKFQQGIAPSGPAGELKFEPHT). Low complexity predominate over residues 387–396 (QEYQQAVQQL).

This sequence belongs to the nucleobindin family. As to quaternary structure, interacts (via GBA motif) with guanine nucleotide-binding protein G(i) alpha subunit GNAI3. Preferentially interacts with inactive rather than active GNAI3. Interaction with GNAI3 is inhibited when NUCB2 binds calcium, probably due to a conformational change which renders the GBA motif inaccessible. Binds to the postmitotic growth suppressor NDN; coexpression abolishes NUCB2 secretion. Interacts with MC4R.

The protein localises to the golgi apparatus. It localises to the endoplasmic reticulum. The protein resides in the nucleus envelope. It is found in the membrane. Its subcellular location is the cytoplasm. The protein localises to the secreted. Calcium-binding protein which may have a role in calcium homeostasis. Acts as a non-receptor guanine nucleotide exchange factor which binds to and activates guanine nucleotide-binding protein (G-protein) alpha subunit GNAI3. Its function is as follows. Anorexigenic peptide, seems to play an important role in hypothalamic pathways regulating food intake and energy homeostasis, acting in a leptin-independent manner. May also exert hypertensive roles and modulate blood pressure through directly acting on peripheral arterial resistance. In intestinal epithelial cells, plays a role in the inhibition of hepatic glucose production via MC4R receptor leading to increased cyclic adenosine monophosphate (cAMP) levels and glucagon-like peptide 1 (GLP-1) secretion. The protein is Nucleobindin-2 (Nucb2) of Rattus norvegicus (Rat).